The chain runs to 703 residues: Peptide transporter CstA (703 aa).

Transmembrane regions (helical) follow at residues T6 to L26, G29 to Y49, V87 to L107, L118 to I138, V162 to V182, P190 to M210, A221 to A241, L256 to L276, L282 to A302, G319 to I339, A374 to I394, L463 to V483, G514 to I534, F547 to V567, Y574 to I594, and A660 to I680.

The protein belongs to the peptide transporter carbon starvation (CstA) (TC 2.A.114) family.

The protein resides in the cell inner membrane. Involved in the uptake of dipeptides and tripeptides. May influence host-pathogen interactions. Involved in motility and agglutination, and has a role in stimulation of dendritic cells. This Campylobacter jejuni subsp. jejuni serotype O:2 (strain ATCC 700819 / NCTC 11168) protein is Peptide transporter CstA.